A 556-amino-acid polypeptide reads, in one-letter code: tRNA (guanine(37)-N(1))-methyltransferase (556 aa).

Residues 1 to 30 constitute a mitochondrion transit peptide; sequence MIITTKALTVLPHSGLRTTHRSLLARLRHY. Residues His249, 287–288, 315–316, and Asn346 each bind S-adenosyl-L-methionine; these read DL and DA. Disordered stretches follow at residues 444 to 465 and 524 to 556; these read QHEEEDLPQLEEAKRPSNKMKD and KKAAKPAPKPLPAKNKSKPDTKKIEADLNEMQM. Composition is skewed to basic and acidic residues over residues 454–465 and 540–549; these read EEAKRPSNKMKD and SKPDTKKIEA.

The protein belongs to the class I-like SAM-binding methyltransferase superfamily. TRM5/TYW2 family. In terms of assembly, monomer.

The protein resides in the mitochondrion matrix. The protein localises to the nucleus. It localises to the cytoplasm. The catalysed reaction is guanosine(37) in tRNA + S-adenosyl-L-methionine = N(1)-methylguanosine(37) in tRNA + S-adenosyl-L-homocysteine + H(+). Its function is as follows. Specifically methylates the N1 position of guanosine-37 in various cytoplasmic and mitochondrial tRNAs. Methylation is not dependent on the nature of the nucleoside 5' of the target nucleoside. This is the first step in the biosynthesis of wybutosine (yW), a modified base adjacent to the anticodon of tRNAs and required for accurate decoding. The polypeptide is tRNA (guanine(37)-N(1))-methyltransferase (Anopheles gambiae (African malaria mosquito)).